We begin with the raw amino-acid sequence, 450 residues long: Probable ATP-dependent RNA helicase MG425 homolog (450 aa).

The Q motif motif lies at Ser3–Gln31. Residues Ile34–Leu206 form the Helicase ATP-binding domain. An ATP-binding site is contributed by Ser47–Thr54. Residues Asp154 to Asp157 carry the DEVD box motif. In terms of domain architecture, Helicase C-terminal spans Arg234–Ile384. The tract at residues Met429–Met450 is disordered. A compositionally biased stretch (basic and acidic residues) spans Arg430 to Met450.

This sequence belongs to the DEAD box helicase family.

It catalyses the reaction ATP + H2O = ADP + phosphate + H(+). The sequence is that of Probable ATP-dependent RNA helicase MG425 homolog from Mycoplasma pneumoniae (strain ATCC 29342 / M129 / Subtype 1) (Mycoplasmoides pneumoniae).